The chain runs to 332 residues: Ketol-acid reductoisomerase (NADP(+)) (332 aa).

Residues 2-182 (ANIYYDEDAS…GATRAGLIET (181 aa)) form the KARI N-terminal Rossmann domain. Residues 25–28 (YGSQ), Ser51, Ser53, and 83–86 (DTVQ) contribute to the NADP(+) site. The active site involves His108. NADP(+) is bound at residue Gly134. The KARI C-terminal knotted domain occupies 183–327 (TFKEETETDL…KELRKMMPWL (145 aa)). Asp191, Glu195, Glu227, and Glu231 together coordinate Mg(2+). Ser252 lines the substrate pocket.

Belongs to the ketol-acid reductoisomerase family. Requires Mg(2+) as cofactor.

It catalyses the reaction (2R)-2,3-dihydroxy-3-methylbutanoate + NADP(+) = (2S)-2-acetolactate + NADPH + H(+). It carries out the reaction (2R,3R)-2,3-dihydroxy-3-methylpentanoate + NADP(+) = (S)-2-ethyl-2-hydroxy-3-oxobutanoate + NADPH + H(+). The protein operates within amino-acid biosynthesis; L-isoleucine biosynthesis; L-isoleucine from 2-oxobutanoate: step 2/4. It functions in the pathway amino-acid biosynthesis; L-valine biosynthesis; L-valine from pyruvate: step 2/4. Involved in the biosynthesis of branched-chain amino acids (BCAA). Catalyzes an alkyl-migration followed by a ketol-acid reduction of (S)-2-acetolactate (S2AL) to yield (R)-2,3-dihydroxy-isovalerate. In the isomerase reaction, S2AL is rearranged via a Mg-dependent methyl migration to produce 3-hydroxy-3-methyl-2-ketobutyrate (HMKB). In the reductase reaction, this 2-ketoacid undergoes a metal-dependent reduction by NADPH to yield (R)-2,3-dihydroxy-isovalerate. This chain is Ketol-acid reductoisomerase (NADP(+)), found in Sulfurihydrogenibium sp. (strain YO3AOP1).